The chain runs to 225 residues: UPF0758 protein Mhun_2739 (225 aa).

Positions 102–225 (RITEPDHILK…VTSLRSLGYL (124 aa)) constitute an MPN domain. Residues His174, His176, and Asp187 each contribute to the Zn(2+) site. A JAMM motif motif is present at residues 174-187 (HNHPSGNPEPSSED).

Belongs to the UPF0758 family.

The polypeptide is UPF0758 protein Mhun_2739 (Methanospirillum hungatei JF-1 (strain ATCC 27890 / DSM 864 / NBRC 100397 / JF-1)).